The sequence spans 107 residues: SH3 domain-binding glutamic acid-rich-like protein 2 (107 aa).

The short motif at 61-67 (QGNPLPP) is the SH3-binding element.

It belongs to the SH3BGR family.

It localises to the nucleus. This chain is SH3 domain-binding glutamic acid-rich-like protein 2 (SH3BGRL2), found in Pongo abelii (Sumatran orangutan).